A 124-amino-acid chain; its full sequence is Small ribosomal subunit protein uS13 (124 aa).

Residues 94–124 are disordered; it reads RGLPVRGQRTKTNARTRKGPKRTIAGKKKAR.

The protein belongs to the universal ribosomal protein uS13 family. In terms of assembly, part of the 30S ribosomal subunit. Forms a loose heterodimer with protein S19. Forms two bridges to the 50S subunit in the 70S ribosome.

Its function is as follows. Located at the top of the head of the 30S subunit, it contacts several helices of the 16S rRNA. In the 70S ribosome it contacts the 23S rRNA (bridge B1a) and protein L5 of the 50S subunit (bridge B1b), connecting the 2 subunits; these bridges are implicated in subunit movement. Contacts the tRNAs in the A and P-sites. The polypeptide is Small ribosomal subunit protein uS13 (Mycolicibacterium vanbaalenii (strain DSM 7251 / JCM 13017 / BCRC 16820 / KCTC 9966 / NRRL B-24157 / PYR-1) (Mycobacterium vanbaalenii)).